A 173-amino-acid chain; its full sequence is NADH-ubiquinone oxidoreductase chain 6 (173 aa).

The next 5 membrane-spanning stretches (helical) occupy residues 1–21, 27–47, 48–68, 87–107, and 139–159; these read MTYF…AVAS, YGVV…LSLG, VSFV…VVFV, VVGY…VGGF, and CGVG…FVVL.

This sequence belongs to the complex I subunit 6 family.

It is found in the mitochondrion membrane. The enzyme catalyses a ubiquinone + NADH + 5 H(+)(in) = a ubiquinol + NAD(+) + 4 H(+)(out). Its function is as follows. Core subunit of the mitochondrial membrane respiratory chain NADH dehydrogenase (Complex I) that is believed to belong to the minimal assembly required for catalysis. Complex I functions in the transfer of electrons from NADH to the respiratory chain. The immediate electron acceptor for the enzyme is believed to be ubiquinone. This Aethia pusilla (Least auklet) protein is NADH-ubiquinone oxidoreductase chain 6 (MT-ND6).